The sequence spans 88 residues: Arminin 1c (88 aa).

An N-terminal signal peptide occupies residues Met1–Ala18. Positions Glu19–Ala57 are excised as a propeptide. Val85 carries the valine amide modification.

Belongs to the arminin family. In terms of tissue distribution, expressed in entodermal epithelium along the body column.

It localises to the secreted. It is found in the target cell membrane. Its function is as follows. Antimicrobial peptide with a broad-spectrum antimicrobial activity. Keeps its antibacterial activity under a wide range of salt concentrations that mimic physiological conditions of human blood, which is surprising, since Hydra is an obligate freshwater animal with nearly no salt tolerance. Does not affect red blood cells. This Hydra vulgaris (Hydra) protein is Arminin 1c.